The primary structure comprises 204 residues: Lipid A acyltransferase PagP (204 aa).

The N-terminal stretch at 1–25 (MSYKHLISACIFSSLCLGQVNAVLA) is a signal peptide. Active-site residues include His76, Asp119, and Ser120.

The protein belongs to the lipid A palmitoyltransferase family. In terms of assembly, homodimer.

The protein localises to the cell outer membrane. It carries out the reaction a lipid A + a 1,2-diacyl-sn-glycero-3-phosphocholine = a hepta-acyl lipid A + a 2-acyl-sn-glycero-3-phosphocholine. It catalyses the reaction a lipid IVA + a 1,2-diacyl-sn-glycero-3-phosphocholine = a lipid IVB + a 2-acyl-sn-glycero-3-phosphocholine. The catalysed reaction is a lipid IIA + a 1,2-diacyl-sn-glycero-3-phosphocholine = a lipid IIB + a 2-acyl-sn-glycero-3-phosphocholine. In terms of biological role, transfers a fatty acid residue from the sn-1 position of a phospholipid to the N-linked hydroxyfatty acid chain on the proximal unit of lipid A or its precursors. This Yersinia enterocolitica serotype O:8 / biotype 1B (strain NCTC 13174 / 8081) protein is Lipid A acyltransferase PagP.